A 711-amino-acid polypeptide reads, in one-letter code: Ferric reductase transmembrane component 3 (711 aa).

The first 20 residues, 1–20 (MYWVLLCGSILLCCLSGASA), serve as a signal peptide directing secretion. Residues 21-166 (SPAKTKMYGK…YANYDIGHTY (146 aa)) lie on the Extracellular side of the membrane. N-linked (GlcNAc...) asparagine glycosylation is found at Asn85, Asn108, Asn120, and Asn134. The chain crosses the membrane as a helical span at residues 167-187 (GGIICAYFVGVMILASILHYL). Over 188–237 (SYTPFKTALFKQRLVRYVRRYLTIPTIWGKHASSFSYLKIFTGFLPTRSE) the chain is Cytoplasmic. A helical membrane pass occupies residues 238 to 258 (GVIILGYLVLHTVFLAYGYQY). The Extracellular portion of the chain corresponds to 259–280 (DPYNLIFDSRREQIARYVADRS). In terms of domain architecture, Ferric oxidoreductase spans 280-414 (SGVLAFAHFP…SGIEWIYAAI (135 aa)). A helical transmembrane segment spans residues 281–301 (GVLAFAHFPLIALFAGRNNFL). Over 302–321 (EFISGVKYTSFIMFHKWLGR) the chain is Cytoplasmic. The heme site is built by His316 and His330. A helical transmembrane segment spans residues 322 to 341 (MMFLDAVIHGAAYTSYSVFY). Topologically, residues 342–353 (KDWAASKEETYW) are extracellular. A helical transmembrane segment spans residues 354-374 (QFGVAALCIVGVMVFFSLAMF). Residues 375–376 (RK) lie on the Cytoplasmic side of the membrane. The chain crosses the membrane as a helical span at residues 377 to 397 (FFYEAFLFLHIVLGALFFYTC). His386 contributes to the heme binding site. Residue Trp398 is a topological domain, extracellular. The helical transmembrane segment at 399–419 (EHVVELSGIEWIYAAIAIWTI) threads the bilayer. His400 provides a ligand contact to heme. An FAD-binding FR-type domain is found at 415–534 (AIWTIDRLIR…EGPYGSSSPV (120 aa)). Residues 420–711 (DRLIRIVRVS…IEYFEEYQSW (292 aa)) are Cytoplasmic-facing. 479-485 (HPFTVLD) is a binding site for FAD. NADP(+)-binding positions include 526–529 (GPYG) and 677–678 (CG).

This sequence belongs to the ferric reductase (FRE) family. FAD serves as cofactor. Requires heme as cofactor.

It localises to the cell membrane. The enzyme catalyses 2 a Fe(II)-siderophore + NADP(+) + H(+) = 2 a Fe(III)-siderophore + NADPH. In terms of biological role, siderophore-iron reductase responsible for reducing extracellular iron prior to import. Catalyzes the reductive uptake of Fe(3+) bound to di- and trihydroxamate siderophores. Fe(3+) is reduced to Fe(2+), which then dissociates from the siderophore and can be imported by the high-affinity Fe(2+) transport complex in the plasma membrane. The sequence is that of Ferric reductase transmembrane component 3 (FRE3) from Saccharomyces cerevisiae (strain ATCC 204508 / S288c) (Baker's yeast).